The following is a 798-amino-acid chain: General transcription and DNA repair factor IIH helicase/translocase subunit XPB (798 aa).

Disordered stretches follow at residues 1–62 and 235–254; these read MGPP…EQIN and PPGATDKPTPDPAAAAGADG. The Nuclear localization signal signature appears at 6–22; it reads KSRKDRSGGDKFGKKRR. The segment covering 10 to 25 has biased composition (basic and acidic residues); it reads DRSGGDKFGKKRRAED. Positions 33–42 are enriched in acidic residues; it reads DDNDSLDATE. The Helicase ATP-binding domain occupies 343–504; it reads MFGNGRARSG…DLNFLIGPKL (162 aa). ATP is bound at residue 360–367; the sequence is AGKSLVGV. Positions 457–460 match the DEVH box motif; the sequence is DEVH. In terms of domain architecture, Helicase C-terminal spans 558-713; it reads RSCQFLIKYH…KVITHLKGMD (156 aa). The disordered stretch occupies residues 746-765; it reads LPGEPGYRPSGSGGAVRRVG.

It belongs to the helicase family. RAD25/XPB subfamily. In terms of assembly, component of the 7-subunit TFIIH core complex composed of haywire/XPB/ERCC3, XPD/ERCC2, GTF2H1, GTF2H2, GTF2H3, GTF2H4 and GTF2H5, which is active in NER. The core complex associates with the 3-subunit CDK-activating kinase (CAK) module composed of CCNH/cyclin H, CDK7 and MNAT1 to form the 10-subunit holoenzyme (holo-TFIIH) active in transcription. Interacts with PUF60. Interacts with ATF7IP. Interacts with Epstein-Barr virus EBNA2.

The protein localises to the nucleus. The enzyme catalyses Couples ATP hydrolysis with the unwinding of duplex DNA by translocating in the 3'-5' direction.. It catalyses the reaction ATP + H2O = ADP + phosphate + H(+). Functionally, ATP-dependent 3'-5' DNA helicase/translocase; binds dsDNA rather than ssDNA, unzipping it in a translocase rather than classical helicase activity. Component of the general transcription and DNA repair factor IIH (TFIIH) core complex. When complexed to CDK-activating kinase (CAK), involved in RNA transcription by RNA polymerase II. The ATPase activity of XPB/ERCC3, but not its helicase activity, is required for DNA opening; it may wrap around the damaged DNA wedging it open, causing localized melting and twisting that allows XPD/ERCC2 helicase to anchor. The ATP-dependent helicase activity of XPB/ERCC3 may be required for promoter escape. Also involved in transcription-coupled nucleotide excision repair (NER) of damaged DNA. In NER, TFIIH acts by opening DNA around the lesion to allow the excision of the damaged oligonucleotide and its replacement by a new DNA fragment. The structure of the TFIIH transcription complex differs from the NER-TFIIH complex; large movements by XPD/ERCC2 and XPB/ERCC3 are stabilized by XPA. The chain is General transcription and DNA repair factor IIH helicase/translocase subunit XPB (hay) from Drosophila melanogaster (Fruit fly).